Here is a 148-residue protein sequence, read N- to C-terminus: MKLDIKILDPRMREQLPAYATTGSAGLDLRACLDAPLTLEPGQTVLVPTGLAIHLADPGYAALILPRSGMGHKHGIVLGNLVGLIDSDYQGQLMISTWNRGTTTFTLNPMERLAQLVIVPVVQATFNIVDEFDTSERGEGGFGSTGKH.

Substrate is bound by residues Arg67–Gly69, Asn80, Leu84–Asp86, and Met94.

It belongs to the dUTPase family. Mg(2+) serves as cofactor.

The enzyme catalyses dUTP + H2O = dUMP + diphosphate + H(+). The protein operates within pyrimidine metabolism; dUMP biosynthesis; dUMP from dCTP (dUTP route): step 2/2. This enzyme is involved in nucleotide metabolism: it produces dUMP, the immediate precursor of thymidine nucleotides and it decreases the intracellular concentration of dUTP so that uracil cannot be incorporated into DNA. This Paraburkholderia phymatum (strain DSM 17167 / CIP 108236 / LMG 21445 / STM815) (Burkholderia phymatum) protein is Deoxyuridine 5'-triphosphate nucleotidohydrolase.